The following is a 151-amino-acid chain: Nucleoside diphosphate kinase (151 aa).

Lys-9, Phe-57, Arg-86, Thr-92, Arg-103, and Asn-113 together coordinate ATP. Catalysis depends on His-116, which acts as the Pros-phosphohistidine intermediate.

The protein belongs to the NDK family. As to quaternary structure, homotetramer. The cofactor is Mg(2+).

It localises to the cytoplasm. It catalyses the reaction a 2'-deoxyribonucleoside 5'-diphosphate + ATP = a 2'-deoxyribonucleoside 5'-triphosphate + ADP. The enzyme catalyses a ribonucleoside 5'-diphosphate + ATP = a ribonucleoside 5'-triphosphate + ADP. Functionally, major role in the synthesis of nucleoside triphosphates other than ATP. The ATP gamma phosphate is transferred to the NDP beta phosphate via a ping-pong mechanism, using a phosphorylated active-site intermediate. This Chloroflexus aurantiacus (strain ATCC 29364 / DSM 637 / Y-400-fl) protein is Nucleoside diphosphate kinase.